The primary structure comprises 249 residues: Vacuolar iron transporter 1 (249 aa).

The Cytoplasmic segment spans residues 1–36 (MADGANDGGNPGAEEQQRLLDQHKEAHFTAGEIVRD). Residues 37–57 (IIIGVSDGLTVPFALAAGLSG) traverse the membrane as a helical segment. The Vacuolar portion of the chain corresponds to 58 to 63 (ANASSS). A helical transmembrane segment spans residues 64–84 (IVLTAGIAEVAAGAISMGLGG). Over 85-170 (YLAAKSEADN…PKRALQSAFT (86 aa)) the chain is Cytoplasmic. The segment at 90 to 165 (SEADNYAREL…LEKPDPKRAL (76 aa)) is cytoplasmic metal binding domain (MBD). The Fe cation site is built by glutamate 102, glutamate 105, glutamate 113, glutamate 116, methionine 149, and glutamate 153. The helical transmembrane segment at 171 to 191 (IAIAYVLGGLVPLIPYMFIPV) threads the bilayer. Over 192 to 194 (ARK) the chain is Vacuolar. The chain crosses the membrane as a helical span at residues 195-215 (AVVASVILTLMALLIFGYAKG). Residues 216–226 (YFTDNKPFKSA) lie on the Cytoplasmic side of the membrane. The chain crosses the membrane as a helical span at residues 227 to 247 (LQTALIGAIASAAAFGMAKAV). At 248-249 (QS) the chain is on the vacuolar side.

Belongs to the CCC1 family. In terms of assembly, homodimer. The dimeric interaction is mediated by both the transmembrane domains (TMDs) and the cytoplasmic metal binding domain (MBD).

It is found in the vacuole membrane. The catalysed reaction is Fe(2+)(in) = Fe(2+)(out). Its activity is regulated as follows. Transport of iron ions is inhibited by zinc ions. In terms of biological role, vacuolar iron transporter involved in the transfer of iron ions from the cytosol to the vacuole for intracellular iron storage. Can transport cobalt ions from the cytosol to the vacuole. The chain is Vacuolar iron transporter 1 from Eucalyptus grandis (Flooded gum).